Reading from the N-terminus, the 316-residue chain is Protein YIPF2 (316 aa).

A2 is subject to N-acetylalanine. The Cytoplasmic segment spans residues 2 to 124 (ASADELTFHE…LRNRPDLYGP (123 aa)). Residues 16-37 (TNLLADTPDAATTSRSDQLTPQ) form a disordered region. Residues 25-36 (AATTSRSDQLTP) show a composition bias toward polar residues. The chain crosses the membrane as a helical span at residues 125–145 (FWICATLAFVLAVTGNLTLVL). The Lumenal portion of the chain corresponds to 146 to 163 (AQRRDPSIHYSPQFHKVT). A helical membrane pass occupies residues 164–184 (VAGISIYCYAWLVPLALWGFL). Over 185-196 (RWRKGVQERMGP) the chain is Cytoplasmic. The helical transmembrane segment at 197–219 (YTFLETVCIYGYSLFVFIPMVVL) threads the bilayer. The Lumenal segment spans residues 220 to 231 (WLIPVPWLQWLF). A helical membrane pass occupies residues 232 to 252 (GALALGLSAAGLVFTLWPVVR). At 253-256 (EDTR) the chain is on the cytoplasmic side. A helical transmembrane segment spans residues 257–277 (LVATVLLSVVVLLHALLAMGC). The Lumenal portion of the chain corresponds to 278-316 (KLYFFQSLPPENVAPPPQITSLPSNIALSPTLPQSLAPS).

Belongs to the YIP1 family. In terms of assembly, interacts with YIPF6; this interaction may stabilize YIPF2. May also form a ternary complex with YIPF1 and YIPF6.

It is found in the golgi apparatus. The protein resides in the cis-Golgi network membrane. Its subcellular location is the trans-Golgi network membrane. It localises to the late endosome membrane. The chain is Protein YIPF2 (YIPF2) from Homo sapiens (Human).